The chain runs to 270 residues: Sec-independent protein translocase protein TatC (270 aa).

Transmembrane regions (helical) follow at residues 35–55 (LILS…YRVQ), 93–113 (AFWA…WAFI), 124–144 (WGLP…VFGY), 176–196 (VVTF…AVIL), 209–229 (QGWR…TPTP), and 231–251 (PANM…GVVL).

The protein belongs to the TatC family. As to quaternary structure, forms a complex with TatA.

It is found in the cell membrane. Its function is as follows. Part of the twin-arginine translocation (Tat) system that transports large folded proteins containing a characteristic twin-arginine motif in their signal peptide across membranes. This Deinococcus radiodurans (strain ATCC 13939 / DSM 20539 / JCM 16871 / CCUG 27074 / LMG 4051 / NBRC 15346 / NCIMB 9279 / VKM B-1422 / R1) protein is Sec-independent protein translocase protein TatC.